We begin with the raw amino-acid sequence, 211 residues long: Glycerol-3-phosphate acyltransferase (211 aa).

5 helical membrane-spanning segments follow: residues 5-25, 55-75, 85-105, 126-146, and 168-188; these read VILG…TGYL, GPGL…ILVA, PVPA…AVLA, VLLA…LVVL, and WFFT…AFVI.

Belongs to the PlsY family. As to quaternary structure, probably interacts with PlsX.

It localises to the cell inner membrane. The catalysed reaction is an acyl phosphate + sn-glycerol 3-phosphate = a 1-acyl-sn-glycero-3-phosphate + phosphate. It functions in the pathway lipid metabolism; phospholipid metabolism. In terms of biological role, catalyzes the transfer of an acyl group from acyl-phosphate (acyl-PO(4)) to glycerol-3-phosphate (G3P) to form lysophosphatidic acid (LPA). This enzyme utilizes acyl-phosphate as fatty acyl donor, but not acyl-CoA or acyl-ACP. The sequence is that of Glycerol-3-phosphate acyltransferase from Thermosynechococcus vestitus (strain NIES-2133 / IAM M-273 / BP-1).